Here is a 310-residue protein sequence, read N- to C-terminus: Probable plastid-lipid-associated protein 2, chloroplastic (310 aa).

The transit peptide at Met-1 to Arg-59 directs the protein to the chloroplast. Position 61 is a phosphothreonine (Thr-61). Positions Glu-65–Leu-94 form a coiled coil.

It belongs to the PAP/fibrillin family.

The protein localises to the plastid. It localises to the chloroplast. The protein resides in the plastoglobule. Functionally, probably involved in light/cold stress-related jasmonate (JA) biosynthesis. The chain is Probable plastid-lipid-associated protein 2, chloroplastic (PAP2) from Arabidopsis thaliana (Mouse-ear cress).